The sequence spans 1324 residues: MHRPRSSWPNLVWDHSFPHHVLTQGKYTTIPYRTYICLQGNETSLKEAEWAIRNDNPRALVKSYNKELWTFTLQEGVTPPSALDRFQLTETTTGVFLPSTTTPSSLTMTKQLTPPGYVALMLAIEAMIQEALKRDDHYVPFGNNLILPVTGDLLHLDARLTPGGDLLLQMYQQETEWEMFGKRKRDVANEIVGTKVVVAPTLVEGVVENSTNQIPDNLPVLLEMLDCLCSVRLRAKKQWTAVRIDTEVLLWPTELLFVDRKSATGKLEDEGKDALLWTEDILDSVFEATQLIRRGESGVNTNESTAAQPQPAQNGTNSMAPAAGTTNATTQRNEENKQIYPTPPEAPKRILPGILLERATAPAGGWGELDEELFGGDEVTEADFNFFDDMGGDKNDTDGDNDNGNDNDNDKADAMDVDVKEEAKKEEMIKKETKEEVPVKEEVQEEEPDESATTAALLTNNPAEEKAVVHGVNDSSTVNGAVDAAVSATVVSSVPYLPSDFDQLIVNPAEQRTFALVEFNREAEQRLNDKYAAGGRFFVPDDSSSDNEGSSDNTGDSSDSGDGSESVPRDVKRQKVDEGTLSDQTDEPEIDAKQLHQQWSAILNYNHDDKPAKKIDSSNDTTNSDGNSNNSNYEEAVQRLAEQVVWDNSCYKGLVPQENYYRPPSARFVKVVEQVFGDTSKRLSLIDFAKMSDKGGQQQPGVGMPINAAAGTAGGGPGTPVTVSNASGVPSGSSGAQASQMGALAVGSALSPSRGATPQPEGSSPETRPSNWTPGITSQVNSAASSPVPLQQHQQQQQSFSPMSPQTPAQAPVPSANSFANAANAAPTQRLATPMYSFMRGGSLIKAQPPILRFWSTFGLSPRNGPKPLTLTLIYPSGTAIGDAAAAFLISFKMCYEGCGFGLVTLGGSNGTGVVSSDYKNLDVSREGVLLVSNPYNDVLGFLNLAKAAAAGSKTATSTSTILTLPCSIFASYTALRAPSAMLLAALCRNLYDHLPPTSTKRRYGSVIQRQAPACVISKPVPPFINFKLLANTPDSVINEDSLLHVAYAASNRWITCAWSDQWGELAKVKVFCLQSESGPLRTLEEVCTEIWETTLQLNGSTDVRSVAVAKLGGMLDDELAMWLRVSSVTRGRRITPFFLVVDNRPSMVVTGSDDGSKGGNVAGGPAPAPPTGAAGAASTGSAPMSTPFRDTDSPDIYNHVTTPSVGEDKIDYDDMSIVDVHDEIHSVTLNHRQPLTMHSTRLGLATGYLVKTSPLNPNQLLVFSLTFVNCPCVVMHVAMKHFLRQYRNLISLAATTGVCDPEYAIVPWHVEAVDKMMRLVEEL.

Disordered regions lie at residues 296–346, 386–455, 535–590, 607–631, 694–816, and 1151–1198; these read ESGV…PPEA, FFDD…ATTA, GRFF…EPEI, HDDKPAKKIDSSNDTTNSDGNSNNS, KGGQ…VPSA, and TGSD…PDIY. Polar residues predominate over residues 298-331; sequence GVNTNESTAAQPQPAQNGTNSMAPAAGTTNATTQ. A compositionally biased stretch (acidic residues) spans 398 to 407; that stretch reads DGDNDNGNDN. Residues 408-442 show a composition bias toward basic and acidic residues; that stretch reads DNDKADAMDVDVKEEAKKEEMIKKETKEEVPVKEE. Residues 546 to 566 are compositionally biased toward low complexity; that stretch reads DNEGSSDNTGDSSDSGDGSES. 2 stretches are compositionally biased toward basic and acidic residues: residues 567–578 and 607–617; these read VPRDVKRQKVDE and HDDKPAKKIDS. Composition is skewed to low complexity over residues 618-631 and 724-743; these read SNDTTNSDGNSNNS and SNASGVPSGSSGAQASQMGA. Positions 750–784 are enriched in polar residues; sequence LSPSRGATPQPEGSSPETRPSNWTPGITSQVNSAA. Low complexity-rich tracts occupy residues 785-816 and 1172-1184; these read SSPVPLQQHQQQQQSFSPMSPQTPAQAPVPSA and TGAAGAASTGSAP.

It belongs to the Mediator complex subunit 13 family. Component of the SRB8-11 complex, which itself associates with the Mediator complex.

The protein resides in the nucleus. Component of the SRB8-11 complex. The SRB8-11 complex is a regulatory module of the Mediator complex which is itself involved in regulation of basal and activated RNA polymerase II-dependent transcription. The SRB8-11 complex may be involved in the transcriptional repression of a subset of genes regulated by Mediator. It may inhibit the association of the Mediator complex with RNA polymerase II to form the holoenzyme complex. The polypeptide is Mediator of RNA polymerase II transcription subunit 13 (SSN2) (Yarrowia lipolytica (strain CLIB 122 / E 150) (Yeast)).